A 273-amino-acid polypeptide reads, in one-letter code: MHEAQIRVAIAGAGGRMGRQLIQAAMAMEGVQLGAALEREGSSLLGSDAGELAGAGKSGVIVQSSLEAVKDDFDVFIDFTRPEGTLTHLAFCRQHGKGMVIGTTGFDDAGKQAIREASQEIAIVFAANFSVGVNVMLKLLEKAAKVMGDYSDIEIIEAHHRHKVDAPSGTALAMGEAIAGALDKDLKDCAVYSREGYTGERVPGTIGFATVRAGDIVGEHTAMFADIGERVEITHKASSRMTFANGALRSALWLKTKKNGLFDMRDVLGLDVL.

NAD(+) is bound by residues 12–17 (GAGGRM) and E38. R39 contributes to the NADP(+) binding site. NAD(+) is bound by residues 102 to 104 (GTT) and 126 to 129 (AANF). H159 functions as the Proton donor/acceptor in the catalytic mechanism. Residue H160 participates in (S)-2,3,4,5-tetrahydrodipicolinate binding. K163 (proton donor) is an active-site residue. 169–170 (GT) contacts (S)-2,3,4,5-tetrahydrodipicolinate.

Belongs to the DapB family. Homotetramer.

Its subcellular location is the cytoplasm. The catalysed reaction is (S)-2,3,4,5-tetrahydrodipicolinate + NAD(+) + H2O = (2S,4S)-4-hydroxy-2,3,4,5-tetrahydrodipicolinate + NADH + H(+). The enzyme catalyses (S)-2,3,4,5-tetrahydrodipicolinate + NADP(+) + H2O = (2S,4S)-4-hydroxy-2,3,4,5-tetrahydrodipicolinate + NADPH + H(+). It functions in the pathway amino-acid biosynthesis; L-lysine biosynthesis via DAP pathway; (S)-tetrahydrodipicolinate from L-aspartate: step 4/4. Its function is as follows. Catalyzes the conversion of 4-hydroxy-tetrahydrodipicolinate (HTPA) to tetrahydrodipicolinate. The protein is 4-hydroxy-tetrahydrodipicolinate reductase of Salmonella dublin (strain CT_02021853).